The sequence spans 506 residues: UDP-N-acetylmuramoyl-L-alanyl-D-glutamate--2,6-diaminopimelate ligase (506 aa).

Position 38 (Ser-38) interacts with UDP-N-acetyl-alpha-D-muramoyl-L-alanyl-D-glutamate. 124–130 (GTNGKTS) is an ATP binding site. UDP-N-acetyl-alpha-D-muramoyl-L-alanyl-D-glutamate contacts are provided by residues 166-167 (TT), Ser-193, and Arg-201. At Lys-233 the chain carries N6-carboxylysine. Meso-2,6-diaminopimelate is bound by residues Arg-401, 425-428 (DNPR), Gly-477, and Glu-481. A Meso-diaminopimelate recognition motif motif is present at residues 425–428 (DNPR).

This sequence belongs to the MurCDEF family. MurE subfamily. It depends on Mg(2+) as a cofactor. In terms of processing, carboxylation is probably crucial for Mg(2+) binding and, consequently, for the gamma-phosphate positioning of ATP.

Its subcellular location is the cytoplasm. It carries out the reaction UDP-N-acetyl-alpha-D-muramoyl-L-alanyl-D-glutamate + meso-2,6-diaminopimelate + ATP = UDP-N-acetyl-alpha-D-muramoyl-L-alanyl-gamma-D-glutamyl-meso-2,6-diaminopimelate + ADP + phosphate + H(+). It functions in the pathway cell wall biogenesis; peptidoglycan biosynthesis. Catalyzes the addition of meso-diaminopimelic acid to the nucleotide precursor UDP-N-acetylmuramoyl-L-alanyl-D-glutamate (UMAG) in the biosynthesis of bacterial cell-wall peptidoglycan. The protein is UDP-N-acetylmuramoyl-L-alanyl-D-glutamate--2,6-diaminopimelate ligase of Leptospira interrogans serogroup Icterohaemorrhagiae serovar copenhageni (strain Fiocruz L1-130).